The sequence spans 75 residues: Protein TM_1420 (75 aa).

4 residues coordinate [2Fe-2S] cluster: cysteine 6, cysteine 11, cysteine 39, and cysteine 43.

[2Fe-2S] cluster serves as cofactor.

In terms of biological role, might be part of a multi-protein complex, possibly involved in metal cluster assembly. The chain is Protein TM_1420 from Thermotoga maritima (strain ATCC 43589 / DSM 3109 / JCM 10099 / NBRC 100826 / MSB8).